The sequence spans 312 residues: tRNA pseudouridine synthase B (312 aa).

D47 acts as the Nucleophile in catalysis.

The protein belongs to the pseudouridine synthase TruB family. Type 1 subfamily.

The enzyme catalyses uridine(55) in tRNA = pseudouridine(55) in tRNA. Its function is as follows. Responsible for synthesis of pseudouridine from uracil-55 in the psi GC loop of transfer RNAs. In Vibrio cholerae serotype O1 (strain M66-2), this protein is tRNA pseudouridine synthase B.